Reading from the N-terminus, the 412-residue chain is Argininosuccinate synthase (412 aa).

ATP contacts are provided by residues 12–20 (AYSGGLDTS) and Ala39. Residues Tyr91 and Ser96 each coordinate L-citrulline. Gly121 provides a ligand contact to ATP. Residues Thr123, Asn127, and Asp128 each coordinate L-aspartate. Asn127 provides a ligand contact to L-citrulline. Residues Arg131, Ser180, Ser189, Glu265, and Tyr277 each coordinate L-citrulline.

Belongs to the argininosuccinate synthase family. Type 1 subfamily. Homotetramer.

The protein resides in the cytoplasm. It carries out the reaction L-citrulline + L-aspartate + ATP = 2-(N(omega)-L-arginino)succinate + AMP + diphosphate + H(+). The protein operates within amino-acid biosynthesis; L-arginine biosynthesis; L-arginine from L-ornithine and carbamoyl phosphate: step 2/3. This is Argininosuccinate synthase from Pseudoalteromonas atlantica (strain T6c / ATCC BAA-1087).